A 489-amino-acid chain; its full sequence is UDP-N-acetylmuramoyl-L-alanyl-D-glutamate--2,6-diaminopimelate ligase (489 aa).

S34 provides a ligand contact to UDP-N-acetyl-alpha-D-muramoyl-L-alanyl-D-glutamate. An ATP-binding site is contributed by 110 to 116 (GTAGKTS). UDP-N-acetyl-alpha-D-muramoyl-L-alanyl-D-glutamate is bound by residues 152–153 (TT), S179, Q185, and R187. K219 is subject to N6-carboxylysine. Residues R383, 407 to 410 (DNPR), G455, and E459 contribute to the meso-2,6-diaminopimelate site. Residues 407-410 (DNPR) carry the Meso-diaminopimelate recognition motif motif.

The protein belongs to the MurCDEF family. MurE subfamily. Requires Mg(2+) as cofactor. Carboxylation is probably crucial for Mg(2+) binding and, consequently, for the gamma-phosphate positioning of ATP.

It is found in the cytoplasm. It carries out the reaction UDP-N-acetyl-alpha-D-muramoyl-L-alanyl-D-glutamate + meso-2,6-diaminopimelate + ATP = UDP-N-acetyl-alpha-D-muramoyl-L-alanyl-gamma-D-glutamyl-meso-2,6-diaminopimelate + ADP + phosphate + H(+). The protein operates within cell wall biogenesis; peptidoglycan biosynthesis. In terms of biological role, catalyzes the addition of meso-diaminopimelic acid to the nucleotide precursor UDP-N-acetylmuramoyl-L-alanyl-D-glutamate (UMAG) in the biosynthesis of bacterial cell-wall peptidoglycan. The chain is UDP-N-acetylmuramoyl-L-alanyl-D-glutamate--2,6-diaminopimelate ligase from Agrobacterium fabrum (strain C58 / ATCC 33970) (Agrobacterium tumefaciens (strain C58)).